Here is a 333-residue protein sequence, read N- to C-terminus: Leukocyte cell-derived chemotaxin 1 (333 aa).

A helical transmembrane segment spans residues 42 to 62 (VGAVVLISGAVLLLFGAIGAF). One can recognise a BRICHOS domain in the interval 104 to 201 (GSGAEEAIEV…LCGDLPIFWL (98 aa)). C131 and C193 are disulfide-bonded. A propeptide spanning residues 211–214 (RERR) is cleaved from the precursor. Residues 212–269 (ERREVVRKTVPTTTKRPHSGPRGNPGPARMRNDSRPSVQEDSEPFNPDNPYHQEGESM) form a disordered region. N243 carries an N-linked (GlcNAc...) asparagine glycan. Disulfide bonds link C281-C285, C282-C322, C292-C316, and C296-C312.

The protein belongs to the chondromodulin-1 family. Post-translationally, after cleavage, the post-translationally modified ChM-I is secreted as a glycoprotein.

The protein resides in the secreted. It localises to the extracellular space. Its subcellular location is the extracellular matrix. It is found in the endomembrane system. In terms of biological role, bifunctional growth regulator that stimulates the growth of cultured chondrocytes in the presence of basic fibroblast growth factor (FGF) but inhibits the growth of cultured vascular endothelial cells. May contribute to the rapid growth of cartilage and vascular invasion prior to the replacement of cartilage by bone during endochondral bone development. Inhibits in vitro tube formation and mobilization of endothelial cells. Plays a role as antiangiogenic factor in cardiac valves to suppress neovascularization. This is Leukocyte cell-derived chemotaxin 1 from Oryctolagus cuniculus (Rabbit).